The chain runs to 480 residues: MSAEVIHQVEEALDTDEKEMLLFLCRDVAIDVVPPNVRDLLDILRERGKLSVGDLAELLYRVRRFDLLKRILKMDRKAVETHLLRNPHLVSDYRVLMAEIGEDLDKSDVSSLIFLMKDYMGRGKISKEKSFLDLVVELEKLNLVAPDQLDLLEKCLKNIHRIDLKTKIQKYKQSVQGAGTSYRNVLQAAIQKSLKDPSNNFRLHNGRSKEQRLKEQLGAQQEPVKKSIQESEAFLPQSIPEERYKMKSKPLGICLIIDCIGNETELLRDTFTSLGYEVQKFLHLSMHGISQILGQFACMPEHRDYDSFVCVLVSRGGSQSVYGVDQTHSGLPLHHIRRMFMGDSCPYLAGKPKMFFIQNYVVSEGQLEDSSLLEVDGPAMKNVEFKAQKRGLCTVHREADFFWSLCTADMSLLEQSHSSPSLYLQCLSQKLRQERKRPLLDLHIELNGYMYDWNSRVSAKEKYYVWLQHTLRKKLILSYT.

DED domains lie at 1–73 and 92–170; these read MSAE…RILK and DYRV…KIQK. An interaction with CASP8 region spans residues 1-195; it reads MSAEVIHQVE…LQAAIQKSLK (195 aa). The segment at 1-227 is interaction with FADD; it reads MSAEVIHQVE…GAQQEPVKKS (227 aa). Residues 1-305 form an interaction with CASP8 propeptide region; that stretch reads MSAEVIHQVE…FACMPEHRDY (305 aa). A not proteolytically processed and involved in apoptosis inhibition region spans residues 1 to 435; sequence MSAEVIHQVE…CLSQKLRQER (435 aa). The tract at residues 192–435 is interaction with CASP3; sequence KSLKDPSNNF…CLSQKLRQER (244 aa). The interaction with TRAF1 and TRAF2 stretch occupies residues 192–480; that stretch reads KSLKDPSNNF…LRKKLILSYT (289 aa). Residues 217 to 480 form an interaction with CASP8 subunits p18 and p10 region; the sequence is LGAQQEPVKK…LRKKLILSYT (264 aa). The caspase stretch occupies residues 263-358; the sequence is ETELLRDTFT…AGKPKMFFIQ (96 aa). Positions 370-480 are interaction with CASP8; sequence SSLLEVDGPA…LRKKLILSYT (111 aa).

Belongs to the peptidase C14A family. As to quaternary structure, TNFRSF6 stimulation triggers recruitment to the death-inducing signaling complex (DISC) formed by TNFRSF6, FADD and CASP8. A proteolytic fragment (p43) stays associated with the DISC. Also interacts with FADD, CASP8, CASP3, TRAF1, TRAF2 and Bcl-X(L) (in vitro). Interacts with RIPK1. In terms of assembly, (Microbial infection) Interacts with HBV protein X. In terms of processing, proteolytically processed by CASP8 generating subunit p43 and p12. Widely expressed. Higher expression in skeletal muscle, pancreas, heart, kidney, placenta, and peripheral blood leukocytes. Also detected in diverse cell lines. Isoform 8 is predominantly expressed in testis and skeletal muscle.

Apoptosis regulator protein which may function as a crucial link between cell survival and cell death pathways in mammalian cells. Acts as an inhibitor of TNFRSF6 mediated apoptosis. A proteolytic fragment (p43) is likely retained in the death-inducing signaling complex (DISC) thereby blocking further recruitment and processing of caspase-8 at the complex. Full length and shorter isoforms have been shown either to induce apoptosis or to reduce TNFRSF-triggered apoptosis. Lacks enzymatic (caspase) activity. This chain is CASP8 and FADD-like apoptosis regulator (CFLAR), found in Homo sapiens (Human).